The sequence spans 348 residues: Anthranilate phosphoribosyltransferase (348 aa).

5-phospho-alpha-D-ribose 1-diphosphate contacts are provided by residues G89, 92-93 (GD), T97, 99-102 (NIST), 117-125 (KHGNRSVSS), and S129. G89 lines the anthranilate pocket. Residue S101 coordinates Mg(2+). An anthranilate-binding site is contributed by N120. Position 175 (R175) interacts with anthranilate. Mg(2+) is bound by residues D233 and E234.

Belongs to the anthranilate phosphoribosyltransferase family. Homodimer. Requires Mg(2+) as cofactor.

The enzyme catalyses N-(5-phospho-beta-D-ribosyl)anthranilate + diphosphate = 5-phospho-alpha-D-ribose 1-diphosphate + anthranilate. It participates in amino-acid biosynthesis; L-tryptophan biosynthesis; L-tryptophan from chorismate: step 2/5. Its function is as follows. Catalyzes the transfer of the phosphoribosyl group of 5-phosphorylribose-1-pyrophosphate (PRPP) to anthranilate to yield N-(5'-phosphoribosyl)-anthranilate (PRA). The sequence is that of Anthranilate phosphoribosyltransferase from Shewanella putrefaciens (strain CN-32 / ATCC BAA-453).